A 530-amino-acid chain; its full sequence is Hyalin (530 aa).

7 consecutive HYR domains span residues 1–66 (NVEI…TVTA), 67–150 (TDSI…NVVE), 151–234 (VDTT…NVVE), 235–319 (VDTT…NVVE), 320–403 (VDTT…NIVE), 404–486 (EDTT…TVNT), and 487–530 (VDTT…ASLV).

As to quaternary structure, homooligomer in presence of calcium. In terms of processing, glycosylated.

It is found in the secreted. Its subcellular location is the extracellular space. It localises to the extracellular matrix. In terms of biological role, major constituent of the hyaline layer. The hyaline layer of echinoderm embryos is an extraembryonic matrix that functions as a substrate for cell adhesion through early development. The protein is Hyalin of Lytechinus variegatus (Green sea urchin).